The following is a 101-amino-acid chain: ATP synthase subunit f, mitochondrial (101 aa).

A mitochondrion-targeting transit peptide spans Met-1–Ala-6.

Belongs to the ATPase F chain family. F-type ATPases have 2 components, CF(1) - the catalytic core - and CF(0) - the membrane proton channel. In yeast, the dimeric form of ATP synthase consists of 17 polypeptides: alpha, beta, gamma, delta, epsilon, 4 (B), 5 (OSCP), 6 (A), 8, 9 (C), d, E (Tim11), f, g, h, i/j and k.

Its subcellular location is the mitochondrion. The protein resides in the mitochondrion inner membrane. Mitochondrial membrane ATP synthase (F(1)F(0) ATP synthase or Complex V) produces ATP from ADP in the presence of a proton gradient across the membrane which is generated by electron transport complexes of the respiratory chain. F-type ATPases consist of two structural domains, F(1) - containing the extramembraneous catalytic core and F(0) - containing the membrane proton channel, linked together by a central stalk and a peripheral stalk. During catalysis, ATP synthesis in the catalytic domain of F(1) is coupled via a rotary mechanism of the central stalk subunits to proton translocation. Part of the complex F(0) domain. Minor subunit located with subunit a in the membrane. This is ATP synthase subunit f, mitochondrial (ATP17) from Saccharomyces cerevisiae (strain ATCC 204508 / S288c) (Baker's yeast).